A 161-amino-acid chain; its full sequence is Globin CTT-VIIB-10 (161 aa).

The signal sequence occupies residues 1–16 (MKFFAVLALCIVGAIA). A Globin domain is found at 18-161 (PLTADEASLV…NTFAIVVPRL (144 aa)). Heme b-binding residues include H76 and H111.

Belongs to the globin family. Homodimer.

The sequence is that of Globin CTT-VIIB-10 (CTT-7B10) from Chironomus thummi thummi (Midge).